A 252-amino-acid polypeptide reads, in one-letter code: Centriole, cilia and spindle-associated protein (252 aa).

Residue M1 is modified to N-acetylmethionine. The ST]-E-Y-X(3)-Y motif 1; required for efficient microtubule binding and stabilization signature appears at 9–15 (SEYMKRY). The segment at 49-163 (WDAWGPDSPS…RSTSKIKENK (115 aa)) is disordered. Residues 54-64 (PDSPSDSSASP) show a composition bias toward low complexity. Position 65 is a phosphoserine (S65). The segment covering 108 to 125 (PKKDTEEKPEEHKTKETD) has biased composition (basic and acidic residues). S191 bears the Phosphoserine mark. The short motif at 242-248 (TEYMRCY) is the ST]-E-Y-X(3)-Y motif 2; required for efficient microtubule binding and stabilization element.

The protein belongs to the CCSAP family. Associates with microtubules; the association occurs on polyglutamylated tubulin.

The protein resides in the cytoplasm. It is found in the cytoskeleton. Its subcellular location is the microtubule organizing center. The protein localises to the centrosome. It localises to the centriole. The protein resides in the spindle. It is found in the cilium basal body. Its subcellular location is the cilium axoneme. The protein localises to the cell projection. It localises to the axon. The protein resides in the cilium. Its function is as follows. Plays a role in microtubule (MT) stabilization and this stabilization involves the maintenance of NUMA1 at the spindle poles. Colocalizes with polyglutamylated MTs to promote MT stabilization and regulate bipolar spindle formation in mitosis. Binding of CCSAP to centrosomes and the spindle around centrosomes during mitosis inhibits MT depolymerization, thereby stabilizing the mitotic spindle. May play a role in embryonic development. May be required for proper cilia beating. This chain is Centriole, cilia and spindle-associated protein (Ccsap), found in Mus musculus (Mouse).